The following is a 138-amino-acid chain: Sec-independent protein translocase protein TatB (138 aa).

The chain crosses the membrane as a helical span at residues 1 to 21 (MFDIGFSELLLIAVVALVVLG). The segment at 116–138 (VHHVHVPPPSTSTHGNNGQEKSQ) is disordered. Residues 126 to 138 (TSTHGNNGQEKSQ) are compositionally biased toward polar residues.

It belongs to the TatB family. In terms of assembly, the Tat system comprises two distinct complexes: a TatABC complex, containing multiple copies of TatA, TatB and TatC subunits, and a separate TatA complex, containing only TatA subunits. Substrates initially bind to the TatABC complex, which probably triggers association of the separate TatA complex to form the active translocon.

The protein localises to the cell inner membrane. In terms of biological role, part of the twin-arginine translocation (Tat) system that transports large folded proteins containing a characteristic twin-arginine motif in their signal peptide across membranes. Together with TatC, TatB is part of a receptor directly interacting with Tat signal peptides. TatB may form an oligomeric binding site that transiently accommodates folded Tat precursor proteins before their translocation. This is Sec-independent protein translocase protein TatB from Xylella fastidiosa (strain Temecula1 / ATCC 700964).